The primary structure comprises 920 residues: B3 domain-containing protein REM17 (920 aa).

3 DNA-binding regions (TF-B3) span residues 12–105, 153–250, and 267–361; these read NPHF…LGPS, RFVA…CRAK, and CFEG…LCPT. 3 disordered regions span residues 405–438, 540–562, and 585–614; these read DDDQ…SSFV, LACS…KNTS, and DDDQ…SSDH. Positions 423 to 432 are enriched in basic and acidic residues; sequence NPREKVESSS. The segment at residues 436-531 is a DNA-binding region (TF-B3 4); the sequence is SFVGSVNPSS…NKPVLSLCPT (96 aa). 2 DNA-binding regions (TF-B3) span residues 616-714 and 727-823; these read SFVA…SLSE and YFVG…LCPA. Over residues 842-852 the composition is skewed to low complexity; that stretch reads NSLSSNPSSGD. Positions 842–870 are disordered; sequence NSLSSNPSSGDDSSRSEESEEENMEDKNI.

Its subcellular location is the nucleus. The chain is B3 domain-containing protein REM17 (REM17) from Arabidopsis thaliana (Mouse-ear cress).